We begin with the raw amino-acid sequence, 186 residues long: UPF0301 protein Daro_3893 (186 aa).

Belongs to the UPF0301 (AlgH) family.

This Dechloromonas aromatica (strain RCB) protein is UPF0301 protein Daro_3893.